The following is a 151-amino-acid chain: Protein-export protein SecB (151 aa).

This sequence belongs to the SecB family. Homotetramer, a dimer of dimers. One homotetramer interacts with 1 SecA dimer.

It localises to the cytoplasm. Functionally, one of the proteins required for the normal export of preproteins out of the cell cytoplasm. It is a molecular chaperone that binds to a subset of precursor proteins, maintaining them in a translocation-competent state. It also specifically binds to its receptor SecA. The protein is Protein-export protein SecB of Azoarcus sp. (strain BH72).